A 204-amino-acid chain; its full sequence is MGNVNPKGFRLKIINTWSSIWYAEKGYKQGLHQDLSIRSYINESFKHAGVSKVIIERTIDLVSVIIHSSRPGVIIGKKGSDIEKIKQKIAEKVKNNVEVNVVGVKRSEIDAVLISNSIAQQLEKRVSFRRAMKKAIQSCLRMGARGIKVSCSGRLGGAEIARTEWYKEGRLPLHTLRANIDYAFAEAKTIYGIIGVKVWVYIGN.

In terms of domain architecture, KH type-2 spans isoleucine 37–lysine 105.

This sequence belongs to the universal ribosomal protein uS3 family. In terms of assembly, part of the 30S ribosomal subunit. Forms a tight complex with proteins S10 and S14.

Its function is as follows. Binds the lower part of the 30S subunit head. Binds mRNA in the 70S ribosome, positioning it for translation. The chain is Small ribosomal subunit protein uS3 from Wolbachia pipientis wMel.